Consider the following 97-residue polypeptide: Protein S100-A10 (97 aa).

Residues lysine 23 and lysine 28 each carry the N6-acetyllysine modification. Lysine 37 is subject to N6-acetyllysine; alternate. A Glycyl lysine isopeptide (Lys-Gly) (interchain with G-Cter in SUMO2); alternate cross-link involves residue lysine 37. Residues lysine 54 and lysine 57 each carry the N6-acetyllysine modification. Residues 60–71 form an ancestral calcium site region; that stretch reads DQCRDGKVGFQS.

The protein belongs to the S-100 family. Heterotetramer containing 2 light chains of S100A10/p11 and 2 heavy chains of ANXA2/p36. Interacts with SCN10A. Interacts with TASOR.

Its function is as follows. Because S100A10 induces the dimerization of ANXA2/p36, it may function as a regulator of protein phosphorylation in that the ANXA2 monomer is the preferred target (in vitro) of tyrosine-specific kinase. The protein is Protein S100-A10 (S100A10) of Bos taurus (Bovine).